A 147-amino-acid chain; its full sequence is Monothiol glutaredoxin-S5 (147 aa).

The Glutaredoxin domain occupies 49–146 (AAEVRRAVAE…PILKKAGALW (98 aa)). Cys69 provides a ligand contact to [2Fe-2S] cluster. Positions 144–147 (ALWL) match the Responsive for interaction with TGA factors motif.

This sequence belongs to the glutaredoxin family. CC-type subfamily.

Its subcellular location is the cytoplasm. The protein resides in the nucleus. In terms of biological role, may only reduce GSH-thiol disulfides, but not protein disulfides. In Oryza sativa subsp. japonica (Rice), this protein is Monothiol glutaredoxin-S5 (GRXS5).